A 207-amino-acid chain; its full sequence is ATP synthase subunit a (207 aa).

The next 6 helical transmembrane spans lie at 3 to 23 (QHVIMALTVLIVVPVIFTIFA), 62 to 82 (LIASIGLFVFFGNLLGIIPGL), 88 to 108 (NLNTTMALALLVFFIYNFEGI), 119 to 139 (FLGPVPAMAPVFVIIELLSHL), 158 to 178 (LISVVLIMLVPFLIPMPVMLI), and 180 to 200 (LIAVFLQTYVFVVLTTVYIAG).

The protein belongs to the ATPase A chain family. As to quaternary structure, F-type ATPases have 2 components, CF(1) - the catalytic core - and CF(0) - the membrane proton channel. CF(1) has five subunits: alpha(3), beta(3), gamma(1), delta(1), epsilon(1). CF(0) has three main subunits: a(1), b(2) and c(9-12). The alpha and beta chains form an alternating ring which encloses part of the gamma chain. CF(1) is attached to CF(0) by a central stalk formed by the gamma and epsilon chains, while a peripheral stalk is formed by the delta and b chains.

The protein resides in the cell inner membrane. Its function is as follows. Key component of the proton channel; it plays a direct role in the translocation of protons across the membrane. This is ATP synthase subunit a from Sulfurihydrogenibium sp. (strain YO3AOP1).